A 337-amino-acid polypeptide reads, in one-letter code: Anaerobic sulfite reductase subunit C (337 aa).

Residues Cys-115, Cys-121, Cys-153, Cys-157, Cys-180, Cys-183, Cys-186, Cys-190, Cys-212, Cys-215, Cys-218, and Cys-222 each coordinate [4Fe-4S] cluster. A siroheme-binding site is contributed by Cys-157. 4Fe-4S ferredoxin-type domains lie at 171–200 (AKMRFTADRCIGCGACVKACSHHAVGCLAL) and 203–232 (GKAVKEESACIGCGECVLACPTLAWQRKPD).

It belongs to the nitrite and sulfite reductase 4Fe-4S domain family. In terms of assembly, the anaerobic sulfite reductase seems to consist of three subunits. Requires [4Fe-4S] cluster as cofactor. Siroheme serves as cofactor.

The protein resides in the cytoplasm. It carries out the reaction hydrogen sulfide + 3 NAD(+) + 3 H2O = sulfite + 3 NADH + 4 H(+). It participates in sulfur metabolism; sulfite reduction. In terms of biological role, this enzyme catalyzes the hydrogen sulfide production from sulfite. It is strictly anaerobic. It is regulated by electron acceptors rather than by cysteine. The chain is Anaerobic sulfite reductase subunit C (asrC) from Salmonella typhi.